Consider the following 514-residue polypeptide: Cholesterol side-chain cleavage enzyme, mitochondrial (514 aa).

The N-terminal 39 residues, serine 1–arginine 39, are a transit peptide targeting the mitochondrion. Cysteine 461 is a binding site for heme.

The protein belongs to the cytochrome P450 family. Heme serves as cofactor.

Its subcellular location is the mitochondrion inner membrane. The catalysed reaction is 6 reduced [adrenodoxin] + cholesterol + 3 O2 + 6 H(+) = 4-methylpentanal + pregnenolone + 6 oxidized [adrenodoxin] + 4 H2O. It functions in the pathway lipid metabolism; C21-steroid hormone metabolism. In terms of biological role, catalyzes the side-chain cleavage reaction of cholesterol to pregnenolone, the precursor of most steroid hormones. The protein is Cholesterol side-chain cleavage enzyme, mitochondrial (CYP11A1) of Hypanus americanus (Southern stingray).